We begin with the raw amino-acid sequence, 524 residues long: Cytochrome P450 4F12 (524 aa).

A run of 2 helical transmembrane segments spans residues 19-39 and 87-107; these read WLLL…AWTY and GFTV…PDTI. Position 468 (C468) interacts with heme.

Belongs to the cytochrome P450 family. Heme is required as a cofactor. As to expression, expressed in small intestine, liver, colon and heart.

The protein localises to the endoplasmic reticulum membrane. It is found in the microsome membrane. The catalysed reaction is an organic molecule + reduced [NADPH--hemoprotein reductase] + O2 = an alcohol + oxidized [NADPH--hemoprotein reductase] + H2O + H(+). It catalyses the reaction (5Z,8Z,11Z,14Z)-eicosatetraenoate + reduced [NADPH--hemoprotein reductase] + O2 = 18-hydroxy-(5Z,8Z,11Z,14Z)-eicosatetraenoate + oxidized [NADPH--hemoprotein reductase] + H2O + H(+). It carries out the reaction (7Z,10Z,13Z,16Z,19Z)-docosapentaenoate + reduced [NADPH--hemoprotein reductase] + O2 = 10,11-epoxy-(7Z,13Z,16Z,19Z)-docosatetraenoate + oxidized [NADPH--hemoprotein reductase] + H2O + H(+). The enzyme catalyses (7Z,10Z,13Z,16Z,19Z)-docosapentaenoate + reduced [NADPH--hemoprotein reductase] + O2 = 13,14-epoxy-(7Z,10Z,16Z,19Z)-docosatetraenoate + oxidized [NADPH--hemoprotein reductase] + H2O + H(+). The catalysed reaction is (7Z,10Z,13Z,16Z,19Z)-docosapentaenoate + reduced [NADPH--hemoprotein reductase] + O2 = 16,17-epoxy-(7Z,10Z,13Z,19Z)-docosatetraenoate + oxidized [NADPH--hemoprotein reductase] + H2O + H(+). It catalyses the reaction (7Z,10Z,13Z,16Z,19Z)-docosapentaenoate + reduced [NADPH--hemoprotein reductase] + O2 = 19,20-epoxy-(7Z,10Z,13Z,16Z)-docosatetraenoate + oxidized [NADPH--hemoprotein reductase] + H2O + H(+). It carries out the reaction (4Z,7Z,10Z,13Z,16Z,19Z)-docosahexaenoate + reduced [NADPH--hemoprotein reductase] + O2 = 10,11-epoxy-(4Z,7Z,13Z,16Z,19Z)-docosapentaenoate + oxidized [NADPH--hemoprotein reductase] + H2O + H(+). The enzyme catalyses (4Z,7Z,10Z,13Z,16Z,19Z)-docosahexaenoate + reduced [NADPH--hemoprotein reductase] + O2 = 13,14-epoxy-(4Z,7Z,10Z,16Z,19Z)-docosapentaenoate + oxidized [NADPH--hemoprotein reductase] + H2O + H(+). The catalysed reaction is (4Z,7Z,10Z,13Z,16Z,19Z)-docosahexaenoate + reduced [NADPH--hemoprotein reductase] + O2 = 16,17-epoxy-(4Z,7Z,10Z,13Z,19Z)-docosapentaenoate + oxidized [NADPH--hemoprotein reductase] + H2O + H(+). It catalyses the reaction (4Z,7Z,10Z,13Z,16Z,19Z)-docosahexaenoate + reduced [NADPH--hemoprotein reductase] + O2 = 19,20-epoxy-(4Z,7Z,10Z,13Z,16Z)-docosapentaenoate + oxidized [NADPH--hemoprotein reductase] + H2O + H(+). Its pathway is lipid metabolism; arachidonate metabolism. Functionally, a cytochrome P450 monooxygenase involved in the metabolism of endogenous polyunsaturated fatty acids (PUFAs). Mechanistically, uses molecular oxygen inserting one oxygen atom into a substrate, and reducing the second into a water molecule, with two electrons provided by NADPH via cytochrome P450 reductase (CPR; NADPH-ferrihemoprotein reductase). Catalyzes the hydroxylation of carbon hydrogen bonds, with preference for omega-2 position. Metabolizes (5Z,8Z,11Z,14Z)-eicosatetraenoic acid (arachidonate) toward 18-hydroxy arachidonate. Catalyzes the epoxidation of double bonds of PUFAs such as docosapentaenoic and docosahexaenoic acids. Has low omega-hydroxylase activity toward leukotriene B4 and arachidonate. Involved in the metabolism of xenobiotics. Catalyzes the hydroxylation of the antihistamine drug ebastine. The sequence is that of Cytochrome P450 4F12 from Homo sapiens (Human).